We begin with the raw amino-acid sequence, 215 residues long: MSKVYDWFEERLEIQAIADDITSKYVPPHVNIFYCLGGITLTCFLVQVATGFAMTFYYRPTVTDAFASVQYIMTEANFGWLIRSVHRWSASMMVLMMILHVFRVYLTGGFKKPRELTWVTGVVLAVLTASFGVTGYSLPWDQIGYWAVKIVTGVPDAIPVIGSPLVELLRGSASVGQSTLTRFYSLHTFVLPLLTAVFMLMHFPMIRKQGISGPL.

The helical transmembrane segment at 32–52 threads the bilayer; the sequence is IFYCLGGITLTCFLVQVATGF. Cys-35 is a binding site for heme c. 2 residues coordinate heme b: His-86 and His-100. 3 consecutive transmembrane segments (helical) span residues 90–110, 116–136, and 186–206; these read ASMMVLMMILHVFRVYLTGGF, LTWVTGVVLAVLTASFGVTGY, and LHTFVLPLLTAVFMLMHFPMI. 2 residues coordinate heme b: His-187 and His-202.

Belongs to the cytochrome b family. PetB subfamily. The 4 large subunits of the cytochrome b6-f complex are cytochrome b6, subunit IV (17 kDa polypeptide, PetD), cytochrome f and the Rieske protein, while the 4 small subunits are PetG, PetL, PetM and PetN. The complex functions as a dimer. Requires heme b as cofactor. It depends on heme c as a cofactor.

It is found in the plastid. It localises to the chloroplast thylakoid membrane. Component of the cytochrome b6-f complex, which mediates electron transfer between photosystem II (PSII) and photosystem I (PSI), cyclic electron flow around PSI, and state transitions. The protein is Cytochrome b6 of Helianthus annuus (Common sunflower).